Reading from the N-terminus, the 374-residue chain is Alginate lyase (374 aa).

A signal peptide spans 1 to 26; sequence MRNPKLKNLLAPTLLSLAMFAGATQA. Residues 67–68, 140–141, and Tyr258 each bind substrate; these read SK and HT.

Belongs to the polysaccharide lyase 5 family.

The protein resides in the periplasm. The enzyme catalyses Eliminative cleavage of alginate to give oligosaccharides with 4-deoxy-alpha-L-erythro-hex-4-enuronosyl groups at their non-reducing ends and beta-D-mannuronate at their reducing end.. In terms of biological role, catalyzes the depolymerization of alginate by cleaving the beta-1,4 glycosidic bond between two adjacent sugar residues via a beta-elimination mechanism. May serve to degrade mislocalized alginate that is trapped in the periplasmic space. The chain is Alginate lyase from Cobetia marina (Deleya marina).